A 246-amino-acid chain; its full sequence is Probable transcriptional regulatory protein CLL_A1008 (246 aa).

The protein belongs to the TACO1 family.

The protein resides in the cytoplasm. The protein is Probable transcriptional regulatory protein CLL_A1008 of Clostridium botulinum (strain Eklund 17B / Type B).